Reading from the N-terminus, the 489-residue chain is NADH-quinone oxidoreductase subunit N (489 aa).

Transmembrane regions (helical) follow at residues 6 to 26, 37 to 57, 66 to 86, 105 to 125, 127 to 147, 159 to 179, 204 to 224, 239 to 259, 271 to 291, 299 to 319, 329 to 349, 377 to 397, 408 to 430, and 452 to 472; these read VLFI…AVML, VFYI…PASS, LLIV…GSLA, FYLL…AHHL, AIFI…GYAF, YMVL…LIYA, ITLL…KLSL, PAPV…AVLL, FFYS…NLLA, RLLG…LIAC, VALY…VVSL, SAMT…GFIG, FHLW…YYLR, and ALTT…LLGI.

Belongs to the complex I subunit 2 family. NDH-1 is composed of 14 different subunits. Subunits NuoA, H, J, K, L, M, N constitute the membrane sector of the complex.

The protein localises to the cell inner membrane. It catalyses the reaction a quinone + NADH + 5 H(+)(in) = a quinol + NAD(+) + 4 H(+)(out). NDH-1 shuttles electrons from NADH, via FMN and iron-sulfur (Fe-S) centers, to quinones in the respiratory chain. The immediate electron acceptor for the enzyme in this species is believed to be ubiquinone. Couples the redox reaction to proton translocation (for every two electrons transferred, four hydrogen ions are translocated across the cytoplasmic membrane), and thus conserves the redox energy in a proton gradient. The polypeptide is NADH-quinone oxidoreductase subunit N (Tolumonas auensis (strain DSM 9187 / NBRC 110442 / TA 4)).